A 434-amino-acid polypeptide reads, in one-letter code: Serine hydroxymethyltransferase (434 aa).

120–122 (GHI) contributes to the (6S)-5,6,7,8-tetrahydrofolate binding site. Lysine 236 is modified (N6-(pyridoxal phosphate)lysine). Glutamate 255 contributes to the (6S)-5,6,7,8-tetrahydrofolate binding site.

It belongs to the SHMT family. Homodimer. The cofactor is pyridoxal 5'-phosphate.

It localises to the cytoplasm. It functions in the pathway amino-acid biosynthesis; glycine biosynthesis; glycine from L-serine: step 1/1. Catalyzes the reversible interconversion of serine and glycine with a modified folate serving as the one-carbon carrier. Also exhibits a pteridine-independent aldolase activity toward beta-hydroxyamino acids, producing glycine and aldehydes, via a retro-aldol mechanism. The protein is Serine hydroxymethyltransferase of Korarchaeum cryptofilum (strain OPF8).